The chain runs to 328 residues: Carbonic anhydrase, chloroplastic (328 aa).

Low complexity predominate over residues 1-15 (MSTSSINGFSLSSLS). Residues 1 to 26 (MSTSSINGFSLSSLSPAKTSTKRTTL) are disordered. The N-terminal 70 residues, 1–70 (MSTSSINGFS…IITPVLREEM (70 aa)), are a transit peptide targeting the chloroplast.

It belongs to the beta-class carbonic anhydrase family. In terms of assembly, homohexamer.

It localises to the plastid. Its subcellular location is the chloroplast stroma. The catalysed reaction is hydrogencarbonate + H(+) = CO2 + H2O. In terms of biological role, reversible hydration of carbon dioxide. The protein is Carbonic anhydrase, chloroplastic of Pisum sativum (Garden pea).